We begin with the raw amino-acid sequence, 152 residues long: Superoxide dismutase [Cu-Zn] 1 (152 aa).

Residues His45, His47, and His62 each contribute to the Cu cation site. Residues Cys56 and Cys145 are joined by a disulfide bond. Residues His62, His70, His79, and Asp82 each contribute to the Zn(2+) site. Cu cation is bound at residue His119.

This sequence belongs to the Cu-Zn superoxide dismutase family. As to quaternary structure, homodimer. It depends on Cu cation as a cofactor. Requires Zn(2+) as cofactor.

It localises to the cytoplasm. The catalysed reaction is 2 superoxide + 2 H(+) = H2O2 + O2. Its function is as follows. Destroys radicals which are normally produced within the cells and which are toxic to biological systems. The sequence is that of Superoxide dismutase [Cu-Zn] 1 (SODCC.1) from Solanum lycopersicum (Tomato).